Here is a 258-residue protein sequence, read N- to C-terminus: Ribosomal RNA small subunit methyltransferase J (258 aa).

Residues 123–124 (ER) and Asp-177 contribute to the S-adenosyl-L-methionine site. The segment at 232-258 (IDGPKPSHSLEGKSSRYDIYPKKALKA) is disordered. Residues 239 to 252 (HSLEGKSSRYDIYP) show a composition bias toward basic and acidic residues.

It belongs to the methyltransferase superfamily. RsmJ family.

It localises to the cytoplasm. The enzyme catalyses guanosine(1516) in 16S rRNA + S-adenosyl-L-methionine = N(2)-methylguanosine(1516) in 16S rRNA + S-adenosyl-L-homocysteine + H(+). Specifically methylates the guanosine in position 1516 of 16S rRNA. The polypeptide is Ribosomal RNA small subunit methyltransferase J (Pseudomonas putida (strain ATCC 47054 / DSM 6125 / CFBP 8728 / NCIMB 11950 / KT2440)).